Here is a 573-residue protein sequence, read N- to C-terminus: Sulfite reductase [NADPH] hemoprotein beta-component (573 aa).

The [4Fe-4S] cluster site is built by Cys438, Cys444, Cys483, and Cys487. Cys487 serves as a coordination point for siroheme.

The protein belongs to the nitrite and sulfite reductase 4Fe-4S domain family. Alpha(8)-beta(8). The alpha component is a flavoprotein, the beta component is a hemoprotein. Siroheme serves as cofactor. Requires [4Fe-4S] cluster as cofactor.

The catalysed reaction is hydrogen sulfide + 3 NADP(+) + 3 H2O = sulfite + 3 NADPH + 4 H(+). It participates in sulfur metabolism; hydrogen sulfide biosynthesis; hydrogen sulfide from sulfite (NADPH route): step 1/1. Its function is as follows. Component of the sulfite reductase complex that catalyzes the 6-electron reduction of sulfite to sulfide. This is one of several activities required for the biosynthesis of L-cysteine from sulfate. In Shouchella clausii (strain KSM-K16) (Alkalihalobacillus clausii), this protein is Sulfite reductase [NADPH] hemoprotein beta-component.